A 270-amino-acid chain; its full sequence is DNA packaging protein OPG160 (270 aa).

ATP is bound at residue 55–62 (VYNPDYDG).

The protein belongs to the orthopoxvirus OPG160 protein family. Interacts with protein OPG137.

Participates in viral DNA packaging and virion morphogenesis. This Homo sapiens (Human) protein is DNA packaging protein OPG160 (OPG160).